A 317-amino-acid polypeptide reads, in one-letter code: DNA-directed RNA polymerase III subunit RPC6 (317 aa).

This sequence belongs to the eukaryotic RPC34/RPC39 RNA polymerase subunit family. In terms of assembly, component of the RNA polymerase III (Pol III) complex consisting of 17 subunits. Interacts with BRF1/TDS4.

Its subcellular location is the nucleus. DNA-dependent RNA polymerase catalyzes the transcription of DNA into RNA using the four ribonucleoside triphosphates as substrates. Specific peripheric component of RNA polymerase III which synthesizes small RNAs, such as 5S rRNA and tRNAs. Involved in recruitment of Pol III to the preinitiation complex. Involved in the configuration of an initiation-competent form of RNA polymerase. The protein is DNA-directed RNA polymerase III subunit RPC6 (RPC34) of Saccharomyces cerevisiae (strain ATCC 204508 / S288c) (Baker's yeast).